Consider the following 377-residue polypeptide: Chaperone protein DnaJ (377 aa).

One can recognise a J domain in the interval 3-67 (DYYDLLGVGR…QTRARYDQFG (65 aa)). The segment at 133-215 (GQEQEIKIPH…CGGQGVRQVR (83 aa)) adopts a CR-type zinc-finger fold. Residues Cys-146, Cys-149, Cys-163, Cys-166, Cys-189, Cys-192, Cys-203, and Cys-206 each contribute to the Zn(2+) site. 4 CXXCXGXG motif repeats span residues 146 to 153 (CDTCGGSG), 163 to 170 (CGTCGGAG), 189 to 196 (CPNCGGTG), and 203 to 210 (CNACGGQG).

The protein belongs to the DnaJ family. In terms of assembly, homodimer. Zn(2+) serves as cofactor.

It localises to the cytoplasm. Participates actively in the response to hyperosmotic and heat shock by preventing the aggregation of stress-denatured proteins and by disaggregating proteins, also in an autonomous, DnaK-independent fashion. Unfolded proteins bind initially to DnaJ; upon interaction with the DnaJ-bound protein, DnaK hydrolyzes its bound ATP, resulting in the formation of a stable complex. GrpE releases ADP from DnaK; ATP binding to DnaK triggers the release of the substrate protein, thus completing the reaction cycle. Several rounds of ATP-dependent interactions between DnaJ, DnaK and GrpE are required for fully efficient folding. Also involved, together with DnaK and GrpE, in the DNA replication of plasmids through activation of initiation proteins. In Parasynechococcus marenigrum (strain WH8102), this protein is Chaperone protein DnaJ.